The chain runs to 178 residues: Large ribosomal subunit protein uL6 (178 aa).

It belongs to the universal ribosomal protein uL6 family. As to quaternary structure, part of the 50S ribosomal subunit.

Functionally, this protein binds to the 23S rRNA, and is important in its secondary structure. It is located near the subunit interface in the base of the L7/L12 stalk, and near the tRNA binding site of the peptidyltransferase center. The chain is Large ribosomal subunit protein uL6 from Listeria innocua serovar 6a (strain ATCC BAA-680 / CLIP 11262).